The sequence spans 578 residues: Protein LIKE EARLY STARVATION, chloroplastic (578 aa).

The N-terminal 56 residues, 1–56 (MALRLGVSIGAALGSSHWDDGQRVRQRDFSASVNFTAPVTSRRSLRGSRTGVRILR), are a transit peptide targeting the chloroplast. Disordered regions lie at residues 146-166 (NNSGDGKEGFPNEDNTVTSEV) and 187-206 (SETSGTETPGPDFWSWTPPQ).

The protein belongs to the ESV1 family. In terms of tissue distribution, expressed ubiquitously.

The protein localises to the plastid. It localises to the chloroplast stroma. Functionally, binds preferentially to highly ordered alpha-glucans, such as starch and crystalline maltodextrins. Involved in the organization of the starch granule matrix, thus influencing starch turnover by modulating the accessibility of starch polymers to modifying and degrading enzymes involved in phosphorylation, hydrolyzes and synthesis, including starch synthases (SSI and SSIII), starch phosphorylases (PHS1), isoamylase, beta-amylase, glucan water dikinase (GWD) and phosphoglucan water dikinase (PWD). The polypeptide is Protein LIKE EARLY STARVATION, chloroplastic (Arabidopsis thaliana (Mouse-ear cress)).